The chain runs to 852 residues: Pentatricopeptide repeat-containing protein At5g02830, chloroplastic (852 aa).

Residues 1-25 (MRDFVIVFGSSSAITNPHHHHRRCY) constitute a chloroplast transit peptide. A disordered region spans residues 17-60 (PHHHHRRCYATAPESNRKTKSNSSFTKLLPSLPQQHSPSPASVS). Over residues 44–58 (LLPSLPQQHSPSPAS) the composition is skewed to low complexity. PPR repeat units lie at residues 334–364 (DMTS…AKRM), 373–407 (DAFT…GVTP), 408–442 (NTHT…GCEP), 443–477 (NSQC…SVNE), 525–557 (TTAT…GLSP), 558–592 (NQIT…GTRP), 593–627 (DVVA…QIKP), and 628–665 (NWVT…GYKP).

Belongs to the PPR family. P subfamily.

The protein resides in the plastid. Its subcellular location is the chloroplast. The chain is Pentatricopeptide repeat-containing protein At5g02830, chloroplastic from Arabidopsis thaliana (Mouse-ear cress).